The primary structure comprises 295 residues: Cyclin-G1 (295 aa).

It belongs to the cyclin family. Cyclin G subfamily. High levels in skeletal muscle, ovary, kidney and colon.

Its subcellular location is the nucleus. Its function is as follows. May play a role in growth regulation. Is associated with G2/M phase arrest in response to DNA damage. May be an intermediate by which p53 mediates its role as an inhibitor of cellular proliferation. The protein is Cyclin-G1 (CCNG1) of Homo sapiens (Human).